The chain runs to 435 residues: Enolase (435 aa).

Glutamine 163 serves as a coordination point for (2R)-2-phosphoglycerate. Glutamate 205 functions as the Proton donor in the catalytic mechanism. Aspartate 243, glutamate 292, and aspartate 319 together coordinate Mg(2+). The (2R)-2-phosphoglycerate site is built by lysine 344, arginine 373, serine 374, and lysine 395. Lysine 344 functions as the Proton acceptor in the catalytic mechanism.

Belongs to the enolase family. Mg(2+) serves as cofactor.

It localises to the cytoplasm. The protein resides in the secreted. It is found in the cell surface. The enzyme catalyses (2R)-2-phosphoglycerate = phosphoenolpyruvate + H2O. The protein operates within carbohydrate degradation; glycolysis; pyruvate from D-glyceraldehyde 3-phosphate: step 4/5. In terms of biological role, catalyzes the reversible conversion of 2-phosphoglycerate (2-PG) into phosphoenolpyruvate (PEP). It is essential for the degradation of carbohydrates via glycolysis. The protein is Enolase of Streptococcus suis (strain 98HAH33).